The sequence spans 579 residues: Zinc finger-containing ubiquitin peptidase 1 (579 aa).

Residues 2–25 form a C2H2-type 1 zinc finger; sequence LSCDICGETVSSEPDMKAHLLIVH. The C2H2-type 2; atypical zinc-finger motif lies at 30-53; sequence VICPFCKLSGVNYDEMCFHIETAH. 2 C2H2-type zinc fingers span residues 155-178 and 194-216; these read PECPFCGKIEDNSQDMETHVKTKH and YDCPMCGLVCTNYHILQEHVDLH. Positions 227-249 are MIU; the sequence is NRVQCSRDLELAQQLQQEEDRKR. Residues 250-275 form a zUBD/ZHA region; that stretch reads RSEESRQEMEEFQKLQRQYGLDNSGG. Residue lysine 263 is modified to N6-acetyllysine. Catalysis depends on cysteine 361, which acts as the Nucleophile. Catalysis depends on histidine 492, which acts as the Proton acceptor. Aspartate 513 is an active-site residue.

This sequence belongs to the peptidase C78 family. ZUFSP subfamily. As to quaternary structure, interacts with RPA1 and RPA2.

The protein localises to the cytoplasm. It is found in the nucleus. The catalysed reaction is Thiol-dependent hydrolysis of ester, thioester, amide, peptide and isopeptide bonds formed by the C-terminal Gly of ubiquitin (a 76-residue protein attached to proteins as an intracellular targeting signal).. In terms of biological role, deubiquitinase with endodeubiquitinase activity that specifically interacts with and cleaves 'Lys-63'-linked long polyubiquitin chains. Shows only weak activity against 'Lys-11' and 'Lys-48'-linked chains. Plays an important role in genome stability pathways, functioning to prevent spontaneous DNA damage and also promote cellular survival in response to exogenous DNA damage. Modulates the ubiquitination status of replication protein A (RPA) complex proteins in response to replication stress. This chain is Zinc finger-containing ubiquitin peptidase 1, found in Bos taurus (Bovine).